Consider the following 249-residue polypeptide: 2,5-diamino-6-ribosylamino-4(3H)-pyrimidinone 5'-phosphate reductase (249 aa).

NADP(+)-binding positions include Thr-79, Asp-83, Met-164, and 187–191 (GGIVI).

The protein belongs to the HTP reductase family. As to quaternary structure, homodimer.

It catalyses the reaction 2,5-diamino-6-(1-D-ribitylamino)pyrimidin-4(3H)-one 5'-phosphate + NADP(+) = 2,5-diamino-6-(1-D-ribosylamino)pyrimidin-4(3H)-one 5'-phosphate + NADPH + H(+). The enzyme catalyses 2,5-diamino-6-(1-D-ribitylamino)pyrimidin-4(3H)-one 5'-phosphate + NAD(+) = 2,5-diamino-6-(1-D-ribosylamino)pyrimidin-4(3H)-one 5'-phosphate + NADH + H(+). It participates in cofactor biosynthesis; riboflavin biosynthesis. Functionally, catalyzes an early step in riboflavin biosynthesis, the NADPH-dependent reduction of the ribose side chain of 2,5-diamino-6-ribosylamino-4(3H)-pyrimidinone 5'-phosphate, yielding 2,5-diamino-6-ribitylamino-4(3H)-pyrimidinone 5'-phosphate. This Kluyveromyces marxianus (Yeast) protein is 2,5-diamino-6-ribosylamino-4(3H)-pyrimidinone 5'-phosphate reductase (RIB7).